The following is a 108-amino-acid chain: Cytochrome c (108 aa).

Heme c contacts are provided by Cys19, Cys22, His23, and Met85.

The protein belongs to the cytochrome c family. Post-translationally, binds 1 heme c group covalently per subunit.

Its subcellular location is the mitochondrion intermembrane space. Its function is as follows. Electron carrier protein. The oxidized form of the cytochrome c heme group can accept an electron from the heme group of the cytochrome c1 subunit of cytochrome reductase. Cytochrome c then transfers this electron to the cytochrome oxidase complex, the final protein carrier in the mitochondrial electron-transport chain. The polypeptide is Cytochrome c (Cochliobolus lunatus (Filamentous fungus)).